Consider the following 477-residue polypeptide: Glycogen synthase (477 aa).

An ADP-alpha-D-glucose-binding site is contributed by K15.

It belongs to the glycosyltransferase 1 family. Bacterial/plant glycogen synthase subfamily.

The enzyme catalyses [(1-&gt;4)-alpha-D-glucosyl](n) + ADP-alpha-D-glucose = [(1-&gt;4)-alpha-D-glucosyl](n+1) + ADP + H(+). Its pathway is glycan biosynthesis; glycogen biosynthesis. Its function is as follows. Synthesizes alpha-1,4-glucan chains using ADP-glucose. This chain is Glycogen synthase, found in Streptococcus pneumoniae (strain Hungary19A-6).